The following is a 372-amino-acid chain: Integral membrane protein GPR137B (372 aa).

The Lumenal segment spans residues 1–32 (MESPAWDATKNDSLPPTLTPAVPPYVKLGLTT). N-linked (GlcNAc...) asparagine glycosylation is present at Asn-11. A helical transmembrane segment spans residues 33-53 (VYTIFYLLLFAFVYVQLWLVL). Topologically, residues 54 to 64 (HYKHKRFSYQT) are cytoplasmic. A helical transmembrane segment spans residues 65 to 85 (VFLFLCLLWASLRAVLFSFYF). The Lumenal segment spans residues 86 to 93 (RNFVEANR). The helical transmembrane segment at 94–114 (LGAFTFWLLYCFPVCLQFFTL) threads the bilayer. Residues 115-144 (TLMNLYFARVIYKAKSKYLPELIKYRLPLY) are Cytoplasmic-facing. The helical transmembrane segment at 145–165 (LAFLVISLLFLVVNLTCAILV) threads the bilayer. At 166-173 (KTDYAETK) the chain is on the lumenal side. The helical transmembrane segment at 174–194 (VIVSIRVAINDTLFVLCAVSL) threads the bilayer. The Cytoplasmic portion of the chain corresponds to 195 to 222 (SVCLYKISKMSLAGVYLESKGSSVCQVT). A helical transmembrane segment spans residues 223-243 (CIGVTVILLYTSRACYNLVVL). Over 244 to 276 (SLSDSRYSSFDYDWYNVSDQADLKCKLGDAGYV) the chain is Lumenal. Asn-259 is a glycosylation site (N-linked (GlcNAc...) asparagine). The chain crosses the membrane as a helical span at residues 277 to 297 (VFGIILFIWELFPTSLVVYFF). Over 298–372 (RVRNSAQDMT…QTGSLQRDST (75 aa)) the chain is Cytoplasmic.

It belongs to the GPR137 family.

The protein localises to the lysosome membrane. Lysosomal integral membrane protein that regulates the localization and activity of mTORC1, a signaling complex promoting cell growth in response to growth factors, energy levels, and amino acids. Interacts with Rag GTPases and increases the lysosomial localization and activity of Rag GTPases and thereby regulates mTORC1 translocation and activity in lysosome. Involved in the regulation of lysosomal morphology and autophagy. Also acts as a negative regulator of osteoclast activity. In terms of biological role, also acts as a negative regulator of osteoclast activity. This chain is Integral membrane protein GPR137B (gpr137b), found in Xenopus laevis (African clawed frog).